The following is a 309-amino-acid chain: Ribonuclease Z (309 aa).

Residues H63, H65, D67, H68, H143, D213, and H271 each contribute to the Zn(2+) site. The Proton acceptor role is filled by D67.

It belongs to the RNase Z family. In terms of assembly, homodimer. It depends on Zn(2+) as a cofactor.

The catalysed reaction is Endonucleolytic cleavage of RNA, removing extra 3' nucleotides from tRNA precursor, generating 3' termini of tRNAs. A 3'-hydroxy group is left at the tRNA terminus and a 5'-phosphoryl group is left at the trailer molecule.. Its function is as follows. Zinc phosphodiesterase, which displays some tRNA 3'-processing endonuclease activity. Probably involved in tRNA maturation, by removing a 3'-trailer from precursor tRNA. This is Ribonuclease Z from Phocaeicola vulgatus (strain ATCC 8482 / DSM 1447 / JCM 5826 / CCUG 4940 / NBRC 14291 / NCTC 11154) (Bacteroides vulgatus).